Here is a 377-residue protein sequence, read N- to C-terminus: Queuine tRNA-ribosyltransferase (377 aa).

The active-site Proton acceptor is Asp-94. Residues Asp-94–Phe-98, Asp-148, Gln-191, and Gly-218 contribute to the substrate site. Positions Gly-249 to Asp-255 are RNA binding. The active-site Nucleophile is Asp-268. Residues Thr-273–Arg-277 form an RNA binding; important for wobble base 34 recognition region.

This sequence belongs to the queuine tRNA-ribosyltransferase family. As to quaternary structure, homodimer. Within each dimer, one monomer is responsible for RNA recognition and catalysis, while the other monomer binds to the replacement base PreQ1.

The enzyme catalyses 7-aminomethyl-7-carbaguanine + guanosine(34) in tRNA = 7-aminomethyl-7-carbaguanosine(34) in tRNA + guanine. The protein operates within tRNA modification; tRNA-queuosine biosynthesis. In terms of biological role, catalyzes the base-exchange of a guanine (G) residue with the queuine precursor 7-aminomethyl-7-deazaguanine (PreQ1) at position 34 (anticodon wobble position) in tRNAs with GU(N) anticodons (tRNA-Asp, -Asn, -His and -Tyr). Catalysis occurs through a double-displacement mechanism. The nucleophile active site attacks the C1' of nucleotide 34 to detach the guanine base from the RNA, forming a covalent enzyme-RNA intermediate. The proton acceptor active site deprotonates the incoming PreQ1, allowing a nucleophilic attack on the C1' of the ribose to form the product. After dissociation, two additional enzymatic reactions on the tRNA convert PreQ1 to queuine (Q), resulting in the hypermodified nucleoside queuosine (7-(((4,5-cis-dihydroxy-2-cyclopenten-1-yl)amino)methyl)-7-deazaguanosine). The chain is Queuine tRNA-ribosyltransferase from Brucella melitensis biotype 1 (strain ATCC 23456 / CCUG 17765 / NCTC 10094 / 16M).